Reading from the N-terminus, the 415-residue chain is Serine hydroxymethyltransferase (415 aa).

Residues 1–10 show a composition bias toward basic and acidic residues; it reads MERSHIRDVD. Residues 1-21 are disordered; the sequence is MERSHIRDVDPDAADALSSER. Residues L119 and 123–125 each bind (6S)-5,6,7,8-tetrahydrofolate; that span reads GHL. K228 carries the N6-(pyridoxal phosphate)lysine modification. Residue 353-355 coordinates (6S)-5,6,7,8-tetrahydrofolate; sequence SAF.

Belongs to the SHMT family. In terms of assembly, homodimer. It depends on pyridoxal 5'-phosphate as a cofactor.

The protein localises to the cytoplasm. The catalysed reaction is (6R)-5,10-methylene-5,6,7,8-tetrahydrofolate + glycine + H2O = (6S)-5,6,7,8-tetrahydrofolate + L-serine. It participates in one-carbon metabolism; tetrahydrofolate interconversion. It functions in the pathway amino-acid biosynthesis; glycine biosynthesis; glycine from L-serine: step 1/1. Functionally, catalyzes the reversible interconversion of serine and glycine with tetrahydrofolate (THF) serving as the one-carbon carrier. Also exhibits THF-independent aldolase activity toward beta-hydroxyamino acids, producing glycine and aldehydes, via a retro-aldol mechanism. This chain is Serine hydroxymethyltransferase, found in Haloquadratum walsbyi (strain DSM 16790 / HBSQ001).